A 635-amino-acid chain; its full sequence is Thrombopoietin receptor (635 aa).

The first 25 residues, 1–25 (MPSWALFMVTSCLLLAPQNLAQVSS), serve as a signal peptide directing secretion. Residues 26–491 (QDVSLLASDS…RVETATETAW (466 aa)) are Extracellular-facing. 2 cysteine pairs are disulfide-bonded: Cys-40–Cys-50 and Cys-77–Cys-93. Asn-117 and Asn-178 each carry an N-linked (GlcNAc...) asparagine glycan. The Fibronectin type-III 1 domain occupies 172-281 (GPRDPKNSTG…WSLPVTVDLP (110 aa)). 4 cysteine pairs are disulfide-bonded: Cys-193-Cys-323, Cys-194-Cys-241, Cys-291-Cys-301, and Cys-334-Cys-352. The interval 205–232 (ALDQSPCAQPTMPWQDGPKQTSPSREAS) is disordered. Asn-298 is a glycosylation site (N-linked (GlcNAc...) asparagine). The N-linked (GlcNAc...) asparagine glycan is linked to Asn-358. Positions 392-486 (PTPNLHWREI…WSDPTRVETA (95 aa)) constitute a Fibronectin type-III 2 domain. The WSXWS motif motif lies at 474-478 (WSSWS). Residues 492–513 (ISLVTALHLVLGLSAVLGLLLL) traverse the membrane as a helical segment. At 514-635 (RWQFPAHYRR…YLPLSYWQQP (122 aa)) the chain is on the cytoplasmic side. The Box 1 motif signature appears at 528–536 (LWPSLPDLH). Residues Lys-553 and Lys-573 each participate in a glycyl lysine isopeptide (Lys-Gly) (interchain with G-Cter in ubiquitin) cross-link. 3 positions are modified to phosphotyrosine: Tyr-591, Tyr-626, and Tyr-631.

Belongs to the type I cytokine receptor family. Type 1 subfamily. As to quaternary structure, homodimer. Interacts with ATXN2L. Interacts with JAK2 and TYK2; these interactions increase MPL localization to the cell membrane. Interacts with THPO. Interacts with SHIP/INPP5D. Interacts with BTK. Interacts with SYK; this interaction negatively regulates THPO-mediated ERK1/2 signaling. Post-translationally, phosphorylated at Tyr-591 in response to THPO stimulation. Ubiquitination at Lys-553 and Lys-573 targets MPL for degradation by both the lysosomal and proteasomal pathways. The E3 ubiquitin-protein ligase CBL significantly contributes to this ubiquitination. In terms of tissue distribution, expressed at a low level in a large number of cells of hematopoietic origin. Isoform 1 and isoform 2 are always found to be coexpressed.

It is found in the cell membrane. Its subcellular location is the golgi apparatus. The protein resides in the cell surface. Its function is as follows. Receptor for thrombopoietin that regulates hematopoietic stem cell renewal, megakaryocyte differentiation, and platelet formation. Upon activation by THPO, induces rapid tyrosine phosphorylation and activation of JAK2, providing docking sites for many signaling proteins such as STAT5, SHIP/INPP5D, GRB2, SOS1 and PI3K. In turn, These signaling cascades lead to the proliferation, survival, and differentiation of megakaryocytes, ultimately leading to increased platelet production. This is Thrombopoietin receptor (MPL) from Homo sapiens (Human).